A 229-amino-acid polypeptide reads, in one-letter code: Flagellar L-ring protein 1 (229 aa).

A signal peptide spans 1–18 (MYLRKISAPLMTMLLLNG). C19 is lipidated: N-palmitoyl cysteine. C19 carries the S-diacylglycerol cysteine lipid modification.

Belongs to the FlgH family. In terms of assembly, the basal body constitutes a major portion of the flagellar organelle and consists of four rings (L,P,S, and M) mounted on a central rod.

The protein resides in the cell outer membrane. The protein localises to the bacterial flagellum basal body. Assembles around the rod to form the L-ring and probably protects the motor/basal body from shearing forces during rotation. This chain is Flagellar L-ring protein 1 (flgH1), found in Yersinia pseudotuberculosis serotype I (strain IP32953).